Consider the following 225-residue polypeptide: UPF0758 protein Bpet3149 (225 aa).

Residues Ala103–Leu225 enclose the MPN domain. Zn(2+) contacts are provided by His174, His176, and Asp187. A JAMM motif motif is present at residues His174–Asp187.

It belongs to the UPF0758 family.

This chain is UPF0758 protein Bpet3149, found in Bordetella petrii (strain ATCC BAA-461 / DSM 12804 / CCUG 43448).